The following is a 37-amino-acid chain: Large ribosomal subunit protein bL36 (37 aa).

This sequence belongs to the bacterial ribosomal protein bL36 family.

The sequence is that of Large ribosomal subunit protein bL36 from Psychromonas ingrahamii (strain DSM 17664 / CCUG 51855 / 37).